The sequence spans 666 residues: Probable potassium transport system protein Kup (666 aa).

The next 12 membrane-spanning stretches (helical) occupy residues 16–36 (GFII…LYTM), 58–78 (ISLI…LVAL), 99–119 (TPWL…DGAL), 141–161 (IFQN…LLFA), 167–187 (TGVI…FLGI), 221–241 (IFIL…YSDL), 253–273 (WPFV…WILA), 292–312 (FTMH…QALI), 343–363 (TYIP…VLLF), 373–393 (YGLA…FFLI), 402–422 (VLLM…ASAV), and 424–444 (FMHG…IMTI).

This sequence belongs to the HAK/KUP transporter (TC 2.A.72) family.

Its subcellular location is the cell membrane. The enzyme catalyses K(+)(in) + H(+)(in) = K(+)(out) + H(+)(out). Its function is as follows. Transport of potassium into the cell. Likely operates as a K(+):H(+) symporter. This chain is Probable potassium transport system protein Kup, found in Streptococcus agalactiae serotype V (strain ATCC BAA-611 / 2603 V/R).